Consider the following 329-residue polypeptide: DNA-directed RNA polymerase subunit alpha (329 aa).

The alpha N-terminal domain (alpha-NTD) stretch occupies residues 1–234; the sequence is MQGSVTEFLK…EQLDAFVELR (234 aa). The interval 248–329 is alpha C-terminal domain (alpha-CTD); sequence FDPILLRPVD…WPPASLIDND (82 aa).

The protein belongs to the RNA polymerase alpha chain family. In terms of assembly, homodimer. The RNAP catalytic core consists of 2 alpha, 1 beta, 1 beta' and 1 omega subunit. When a sigma factor is associated with the core the holoenzyme is formed, which can initiate transcription.

The catalysed reaction is RNA(n) + a ribonucleoside 5'-triphosphate = RNA(n+1) + diphosphate. DNA-dependent RNA polymerase catalyzes the transcription of DNA into RNA using the four ribonucleoside triphosphates as substrates. This is DNA-directed RNA polymerase subunit alpha from Idiomarina loihiensis (strain ATCC BAA-735 / DSM 15497 / L2-TR).